The sequence spans 275 residues: Tumor necrosis factor receptor superfamily member 14 (275 aa).

A signal peptide spans 1–38; sequence MEPLPGWGSAPWSQAPTDNTFRLVPCVFLLNLLQRISA. 3 TNFR-Cys repeats span residues 41–75, 77–119, and 120–162; these read SCRQ…GTVC, PCPP…DTVC, and RCIP…DTVC. 8 disulfides stabilise this stretch: Cys42/Cys53, Cys54/Cys67, Cys57/Cys75, Cys78/Cys93, Cys96/Cys111, Cys99/Cys119, Cys121/Cys138, and Cys144/Cys162. N-linked (GlcNAc...) asparagine glycans are attached at residues Asn184 and Asn197. A helical membrane pass occupies residues 211–231; the sequence is VVSILLPLVIVGAGIAGFLIC.

This sequence belongs to the tumor necrosis factor receptor superfamily. Interacts with TRAF2, TRAF3 and TRAF5. Interacts (via CRD1/TNFR-Cys 1) with CD160; this interaction is direct. Interacts (via CRD1/TNFR-Cys 1) with BTLA; this interaction is direct. Post-translationally, N-glycosylated. As to expression, expressed at mucosal sites including colon and pulmonary epithelial cells. Expressed in naive T cells.

The protein localises to the cell membrane. Receptor for four distinct ligands: The TNF superfamily members TNFSF14/LIGHT and homotrimeric LTA/lymphotoxin-alpha and the immunoglobulin superfamily members BTLA and CD160, altogether defining a complex stimulatory and inhibitory signaling network. Signals via the TRAF2-TRAF3 E3 ligase pathway to promote immune cell survival and differentiation. Participates in bidirectional cell-cell contact signaling between antigen presenting cells and lymphocytes. In response to ligation of TNFSF14/LIGHT, delivers costimulatory signals to T cells, promoting cell proliferation and effector functions. Interacts with CD160 on NK cells, enhancing IFNG production and anti-tumor immune response. In the context of bacterial infection, acts as a signaling receptor on epithelial cells for CD160 from intraepithelial lymphocytes, triggering the production of antimicrobial proteins and pro-inflammatory cytokines. Upon binding to CD160 on activated CD4+ T cells, down-regulates CD28 costimulatory signaling, restricting memory and alloantigen-specific immune response. May interact in cis (on the same cell) or in trans (on other cells) with BTLA. In cis interactions, appears to play an immune regulatory role inhibiting in trans interactions in naive T cells to maintain a resting state. In trans interactions, can predominate during adaptive immune response to provide survival signals to effector T cells. In Mus musculus (Mouse), this protein is Tumor necrosis factor receptor superfamily member 14.